The chain runs to 272 residues: CDAN1-interacting nuclease 1 (272 aa).

It is found in the nucleus. It localises to the cytoplasm. Functionally, may play a role in erythroid cell differentiation. This chain is CDAN1-interacting nuclease 1 (CDIN1), found in Gallus gallus (Chicken).